Here is a 61-residue protein sequence, read N- to C-terminus: Protein YncO (61 aa).

A helical membrane pass occupies residues 18-38; sequence HVFLYVFYIFLFLVLFIMTIY.

The protein localises to the cell inner membrane. In Escherichia coli (strain K12), this protein is Protein YncO.